The sequence spans 218 residues: Trichothecene biosynthesis transcription regulator TRI6 (218 aa).

The tract at residues 154 to 181 (SQSTNDPGDAGKKGFATRKDRARHEAKH) is disordered. The segment covering 162–176 (DAGKKGFATRKDRAR) has biased composition (basic and acidic residues). A C2H2-type zinc finger spans residues 185 to 215 (IRCQWRDNNGDQCTRTFSRMDNMRDHFRRIH).

It localises to the nucleus. Functionally, transcriptional activator of part of the trichothecene biosynthesis cluster that mediates the production of the antimicrobial trichothecene harzianum A (HA) that plays a role in Botrytis cinerea antagonistic activity and plant defense priming. Regulates expression of both trichothecene and mevalonate pathway genes. This is Trichothecene biosynthesis transcription regulator TRI6 from Trichoderma arundinaceum.